Here is a 394-residue protein sequence, read N- to C-terminus: Na(+)/H(+) antiporter NhaA (394 aa).

The next 11 membrane-spanning stretches (helical) occupy residues 14 to 34 (AGGLILIIAAAIALLMANSAL), 59 to 79 (LLLWINDGLMAVFFLMIGLEV), 95 to 115 (VFPAIAALGGMLAPALIYLLF), 125 to 145 (GWAIPAATDIAFALGVMALLG), 154 to 174 (VFLLALAIIDDLGVIIIIALF), 179 to 199 (VSLQSLGIAAAAIALLAYMNW), 213 to 233 (LVLWVCILKSGVHATLAGVIV), 254 to 274 (GLHPWVAYLILPLFAFANAGV), 292 to 312 (IATGLFIGKPLGIFTFSWLAV), 328 to 348 (IFAVSVLCGIGFTMSIFIASL), and 363 to 383 (LGILLGSTTAAVVGYSLLRLV).

This sequence belongs to the NhaA Na(+)/H(+) (TC 2.A.33) antiporter family.

The protein localises to the cell inner membrane. It carries out the reaction Na(+)(in) + 2 H(+)(out) = Na(+)(out) + 2 H(+)(in). Na(+)/H(+) antiporter that extrudes sodium in exchange for external protons. This chain is Na(+)/H(+) antiporter NhaA, found in Yersinia pestis bv. Antiqua (strain Antiqua).